A 624-amino-acid chain; its full sequence is DNA (cytosine-5)-methyltransferase DRM1 (624 aa).

2 consecutive UBA domains span residues 57 to 100 and 108 to 149; these read RISD…LFNY and SSKS…LLTY. The interval 160–189 is disordered; it reads DMNININDDDDDNLYSLSSDDEEDELNNSS. Residues 166-185 show a composition bias toward acidic residues; sequence NDDDDDNLYSLSSDDEEDEL. The UBA 3 domain maps to 188–231; sequence SSNEDRILQALIKMGYLREDAAIAIERCGEDASMEEVVDFICAA. In terms of domain architecture, SAM-dependent MTase DRM-type spans 291-622; the sequence is MHRPVPIPDI…EAVRRKARHM (332 aa).

It belongs to the class I-like SAM-binding methyltransferase superfamily. DRM-methyltransferase family.

Its subcellular location is the nucleus. The catalysed reaction is a 2'-deoxycytidine in DNA + S-adenosyl-L-methionine = a 5-methyl-2'-deoxycytidine in DNA + S-adenosyl-L-homocysteine + H(+). Involved in de novo DNA methylation. Controls asymmetric and CpNpG methylation. Required for FWA gene silencing but not for the maintenance of SUP gene silencing. Functionally redundant to CMT3 to maintain non-CpG methylation. Involved in RNA-directed DNA methylation. This is DNA (cytosine-5)-methyltransferase DRM1 (DRM1) from Arabidopsis thaliana (Mouse-ear cress).